Reading from the N-terminus, the 577-residue chain is Proline--tRNA ligase (577 aa).

The protein belongs to the class-II aminoacyl-tRNA synthetase family. ProS type 1 subfamily. In terms of assembly, homodimer.

The protein resides in the cytoplasm. The enzyme catalyses tRNA(Pro) + L-proline + ATP = L-prolyl-tRNA(Pro) + AMP + diphosphate. Catalyzes the attachment of proline to tRNA(Pro) in a two-step reaction: proline is first activated by ATP to form Pro-AMP and then transferred to the acceptor end of tRNA(Pro). As ProRS can inadvertently accommodate and process non-cognate amino acids such as alanine and cysteine, to avoid such errors it has two additional distinct editing activities against alanine. One activity is designated as 'pretransfer' editing and involves the tRNA(Pro)-independent hydrolysis of activated Ala-AMP. The other activity is designated 'posttransfer' editing and involves deacylation of mischarged Ala-tRNA(Pro). The misacylated Cys-tRNA(Pro) is not edited by ProRS. The protein is Proline--tRNA ligase of Helicobacter pylori (strain Shi470).